Consider the following 231-residue polypeptide: S-norcoclaurine synthase 1 (231 aa).

Tyr-107 to Glu-109 provides a ligand contact to dopamine. Lys-121 acts as the Proton donor in catalysis. Asp-140 contacts (4-hydroxyphenyl)acetaldehyde. A helical transmembrane segment spans residues Leu-210–Pro-230.

The protein belongs to the BetVI family. In terms of tissue distribution, detected in roots, stems, leaves, flower buds and germinating seeds.

Its subcellular location is the membrane. It carries out the reaction (4-hydroxyphenyl)acetaldehyde + dopamine = (S)-norcoclaurine + H2O. The protein operates within alkaloid biosynthesis; (S)-reticuline biosynthesis. With respect to regulation, activity doubles within 5 hours of elicitor treatment and continues to increase for at least 80 hours. Involved in the biosynthesis of (S)-coclaurine, the common precursor of all benzylisoquinoline alkaloids such as morphine, sanguinarine, codeine or papaverine. Condenses dopamine and 4-hydroxyphenylacetaldehyde. This Papaver somniferum (Opium poppy) protein is S-norcoclaurine synthase 1.